Here is a 468-residue protein sequence, read N- to C-terminus: Glutamate--tRNA ligase (468 aa).

The 'HIGH' region motif lies at 8-18; the sequence is PSPTGFLHVGG. Residues Cys-97, Cys-99, Cys-124, and Asp-126 each contribute to the Zn(2+) site. Residues 236–240 carry the 'KMSKS' region motif; sequence KLSKR. Residue Lys-239 participates in ATP binding.

The protein belongs to the class-I aminoacyl-tRNA synthetase family. Glutamate--tRNA ligase type 1 subfamily. Monomer. It depends on Zn(2+) as a cofactor.

The protein resides in the cytoplasm. The enzyme catalyses tRNA(Glu) + L-glutamate + ATP = L-glutamyl-tRNA(Glu) + AMP + diphosphate. Functionally, catalyzes the attachment of glutamate to tRNA(Glu) in a two-step reaction: glutamate is first activated by ATP to form Glu-AMP and then transferred to the acceptor end of tRNA(Glu). This is Glutamate--tRNA ligase from Francisella tularensis subsp. tularensis (strain SCHU S4 / Schu 4).